A 341-amino-acid chain; its full sequence is Anthranilate phosphoribosyltransferase (341 aa).

Residues G81, 84–85 (GD), 91–94 (NVST), 109–117 (KHGNRSVSS), and S121 contribute to the 5-phospho-alpha-D-ribose 1-diphosphate site. An anthranilate-binding site is contributed by G81. S93 is a binding site for Mg(2+). N112 serves as a coordination point for anthranilate. Residue R167 coordinates anthranilate. Mg(2+) contacts are provided by D226 and E227.

This sequence belongs to the anthranilate phosphoribosyltransferase family. Homodimer. Mg(2+) is required as a cofactor.

The enzyme catalyses N-(5-phospho-beta-D-ribosyl)anthranilate + diphosphate = 5-phospho-alpha-D-ribose 1-diphosphate + anthranilate. It participates in amino-acid biosynthesis; L-tryptophan biosynthesis; L-tryptophan from chorismate: step 2/5. Functionally, catalyzes the transfer of the phosphoribosyl group of 5-phosphorylribose-1-pyrophosphate (PRPP) to anthranilate to yield N-(5'-phosphoribosyl)-anthranilate (PRA). The polypeptide is Anthranilate phosphoribosyltransferase (Teredinibacter turnerae (strain ATCC 39867 / T7901)).